The following is a 94-amino-acid chain: MNLYEVLRRPLISEKNSVHATQNKYAFEIAKGANKRMVKLAVEQAFNVTVEDVNMLHIPGKQKRMGRNLIQTAGLRKAIITLKEGDKITLFEGV.

It belongs to the universal ribosomal protein uL23 family. In terms of assembly, part of the 50S ribosomal subunit. Contacts protein L29, and trigger factor when it is bound to the ribosome.

Its function is as follows. One of the early assembly proteins it binds 23S rRNA. One of the proteins that surrounds the polypeptide exit tunnel on the outside of the ribosome. Forms the main docking site for trigger factor binding to the ribosome. The polypeptide is Large ribosomal subunit protein uL23 (Dehalococcoides mccartyi (strain ATCC BAA-2100 / JCM 16839 / KCTC 5957 / BAV1)).